A 218-amino-acid chain; its full sequence is Recombination protein RecR (218 aa).

Residues 56 to 71 form a C4-type zinc finger; the sequence is CRICCNISREEVCRIC. The Toprim domain occupies 79–195; that stretch reads GTICVVEEPK…VVSRLASGMP (117 aa).

This sequence belongs to the RecR family.

Functionally, may play a role in DNA repair. It seems to be involved in an RecBC-independent recombinational process of DNA repair. It may act with RecF and RecO. This chain is Recombination protein RecR, found in Corynebacterium glutamicum (strain R).